Reading from the N-terminus, the 1640-residue chain is RING finger protein 17 (1640 aa).

Residues 30–73 (CTRCGRKVSVASGDHHKFPCGHAFCELCLLAPQEYTTSKCTDCE) form an RING-type zinc finger. S134 is modified (phosphoserine). The residue at position 229 (K229) is an N6-acetyllysine. 2 disordered regions span residues 348 to 376 (TDET…TKEM) and 413 to 435 (DDPI…APVG). Basic and acidic residues predominate over residues 360 to 373 (APDRHLEGKKKQPT). Tudor domains follow at residues 751 to 809 (CPLQ…FLEP) and 985 to 1044 (KWEC…LKTM). Positions 1170–1184 (NEHKVPDSKGKKSES) are enriched in basic and acidic residues. Residues 1170–1191 (NEHKVPDSKGKKSESRSTGCYR) form a disordered region. Tudor domains are found at residues 1246-1303 (SWKK…PDTP) and 1496-1556 (DFSS…LMQY).

In terms of assembly, interacts with MXD1, MXD3, MXD4, MXI1 and PIWIL1. Self-associates. In terms of tissue distribution, expressed at high levels in adult testis. Expressed in male germ cells (at protein level). Expressed at lower levels in adult thyroid, submaxillary gland, ovary and epididymis.

It localises to the cytoplasm. The protein localises to the nucleus. Seems to be involved in regulation of transcriptional activity of MYC. In vitro, inhibits DNA-binding activity of Mad-MAX heterodimers. Can recruit Mad transcriptional repressors (MXD1, MXD3, MXD4 and MXI1) to the cytoplasm. May be involved in spermiogenesis. The protein is RING finger protein 17 (Rnf17) of Mus musculus (Mouse).